The chain runs to 140 residues: Ergosterol biosynthetic protein 28 homolog (140 aa).

4 consecutive transmembrane segments (helical) span residues 4 to 24 (FLNVLRSWLVMVSIIAMGNTL), 52 to 72 (TFGIWTLLSSVIRCLCAIDIH), 79 to 99 (ITLWTFLLALGHFLSELFVFG), and 105 to 125 (VGVLAPLMVASFSILGMLVGL).

Belongs to the ERG28 family.

The protein localises to the endoplasmic reticulum membrane. The polypeptide is Ergosterol biosynthetic protein 28 homolog (Mus musculus (Mouse)).